Consider the following 460-residue polypeptide: 3-isopropylmalate dehydratase large subunit (460 aa).

Cysteine 338, cysteine 398, and cysteine 401 together coordinate [4Fe-4S] cluster.

This sequence belongs to the aconitase/IPM isomerase family. LeuC type 1 subfamily. In terms of assembly, heterodimer of LeuC and LeuD. The cofactor is [4Fe-4S] cluster.

It catalyses the reaction (2R,3S)-3-isopropylmalate = (2S)-2-isopropylmalate. It functions in the pathway amino-acid biosynthesis; L-leucine biosynthesis; L-leucine from 3-methyl-2-oxobutanoate: step 2/4. Catalyzes the isomerization between 2-isopropylmalate and 3-isopropylmalate, via the formation of 2-isopropylmaleate. The protein is 3-isopropylmalate dehydratase large subunit of Streptococcus thermophilus (strain CNRZ 1066).